Here is a 251-residue protein sequence, read N- to C-terminus: ATP synthase subunit a 2 (251 aa).

5 consecutive transmembrane segments (helical) span residues 35–55 (GQVF…SLLA), 94–114 (LPFI…GSLI), 133–153 (INTT…AGLS), 198–218 (LVVA…LMAL), and 219–239 (GLFT…AYIH).

The protein belongs to the ATPase A chain family. In terms of assembly, F-type ATPases have 2 components, CF(1) - the catalytic core - and CF(0) - the membrane proton channel. CF(1) has five subunits: alpha(3), beta(3), gamma(1), delta(1), epsilon(1). CF(0) has four main subunits: a, b, b' and c.

It is found in the cellular thylakoid membrane. Key component of the proton channel; it plays a direct role in the translocation of protons across the membrane. This is ATP synthase subunit a 2 from Crocosphaera subtropica (strain ATCC 51142 / BH68) (Cyanothece sp. (strain ATCC 51142)).